A 483-amino-acid chain; its full sequence is Cysteine--tRNA ligase (483 aa).

Cys-27 serves as a coordination point for Zn(2+). A 'HIGH' region motif is present at residues 29–39; sequence ITAYDYCHIGH. Zn(2+)-binding residues include Cys-208, His-231, and Glu-235. The 'KMSKS' region signature appears at 263-267; sequence KMSKS. Lys-266 lines the ATP pocket.

This sequence belongs to the class-I aminoacyl-tRNA synthetase family. As to quaternary structure, monomer. It depends on Zn(2+) as a cofactor.

It localises to the cytoplasm. The enzyme catalyses tRNA(Cys) + L-cysteine + ATP = L-cysteinyl-tRNA(Cys) + AMP + diphosphate. This Desulfovibrio desulfuricans (strain ATCC 27774 / DSM 6949 / MB) protein is Cysteine--tRNA ligase.